Reading from the N-terminus, the 440-residue chain is Thymidine phosphorylase (440 aa).

Belongs to the thymidine/pyrimidine-nucleoside phosphorylase family. As to quaternary structure, homodimer.

The catalysed reaction is thymidine + phosphate = 2-deoxy-alpha-D-ribose 1-phosphate + thymine. It participates in pyrimidine metabolism; dTMP biosynthesis via salvage pathway; dTMP from thymine: step 1/2. The enzymes which catalyze the reversible phosphorolysis of pyrimidine nucleosides are involved in the degradation of these compounds and in their utilization as carbon and energy sources, or in the rescue of pyrimidine bases for nucleotide synthesis. This chain is Thymidine phosphorylase, found in Escherichia coli O127:H6 (strain E2348/69 / EPEC).